The primary structure comprises 278 residues: MAIIKYKPTTNGRRNMTSSDFAEITKKKPEKTLLESQSHTAGRNSYGHITVRHRGGGHKQKYRIIDFKRNKDDVKAVVKAIEYDPNRTANIALLHYTDGIKAYILAPKDLKVGTVVESGPNADIKPGNALPLSAIPAGTEIHNIELKPGKGGQLVRSAGTVAQVLGNDGKYTLVRLQSGEVRKILSTCRATIGSVGNEQHSLIQLGKAGRKRWLGKRPQSRGSVMNPNDHPHGGGEGKAPVGRPQPMTPWGKKSRGIKTRNSKARSEKLIIRHRKGNK.

Basic residues-rich tracts occupy residues 210–219 (RKRWLGKRPQ) and 252–263 (KKSRGIKTRNSK). Residues 210–278 (RKRWLGKRPQ…LIIRHRKGNK (69 aa)) form a disordered region.

Belongs to the universal ribosomal protein uL2 family. As to quaternary structure, part of the 50S ribosomal subunit. Forms a bridge to the 30S subunit in the 70S ribosome.

Functionally, one of the primary rRNA binding proteins. Required for association of the 30S and 50S subunits to form the 70S ribosome, for tRNA binding and peptide bond formation. It has been suggested to have peptidyltransferase activity; this is somewhat controversial. Makes several contacts with the 16S rRNA in the 70S ribosome. The protein is Large ribosomal subunit protein uL2 of Lactobacillus gasseri (strain ATCC 33323 / DSM 20243 / BCRC 14619 / CIP 102991 / JCM 1131 / KCTC 3163 / NCIMB 11718 / NCTC 13722 / AM63).